The following is a 428-amino-acid chain: MDLTISNELTGEIYGPIEVSEDMALTDLIALLQADCGFDKTKHDLYYNMDILDSNRTQSLKELGLKTDDLLLIRGKISNSIQTDAATLSDEAFIEQFRQELLNNQMLRSQLILQIPGLNDLVNDPLLFRERLGPLILQRRYGGYNTAMNPFGIPQDEYTRLMANPDDPDNKKRIAELLDQQAIDEQLRNAIEYTPEMFTQVPMLYINIEINNYPVKAFVDTGAQTTIMSTRLAKKTGLSRMIDKRFIGEARGVGTGKIIGRIHQAQVKIETQYIPCSFTVLDTDIDVLIGLDMLKRHLACVDLKENVLRIAEVETSFLSEAEIPKSFQEGLPAPTSVTTSSDKPLTPTKTSSTLPPQPGAVPALAPRTGMGPTPTGRSTAGATTATGRTFPEQTIKQLMDLGFPRDAVVKALKQTNGNAEFAASLLFQ.

Residues 1-80 (MDLTISNELT…LLIRGKISNS (80 aa)) form the Ubiquitin-like domain. K171 participates in a covalent cross-link: Glycyl lysine isopeptide (Lys-Gly) (interchain with G-Cter in ubiquitin). D220 is a catalytic residue. A Glycyl lysine isopeptide (Lys-Gly) (interchain with G-Cter in ubiquitin) cross-link involves residue K257. Residues 328–388 (QEGLPAPTSV…TAGATTATGR (61 aa)) form a disordered region. Low complexity-rich tracts occupy residues 338–354 (TTSS…SSTL) and 371–388 (GPTP…ATGR). The 40-residue stretch at 389 to 428 (TFPEQTIKQLMDLGFPRDAVVKALKQTNGNAEFAASLLFQ) folds into the UBA domain.

Belongs to the DDI1 family. As to quaternary structure, forms homodimers. Interacts with RAD23. These interactions are mediated by the UBA domain. Is also able to bind ubiquitin and polyubiquitinated proteins. Interacts with the SNAREs SNC1, SNC2, SSO1, TLG1 and TLG2. Binding to SSO1 is promoted by the phosphorylation of 'Ser-49' of SSO1 by TKP1.

The protein resides in the cytoplasm. It localises to the cell membrane. Its activity is regulated as follows. Inhibited by the proteinase inhibitors indinavir, lopinavir, nelfinavir, isovaleryl pepstatin, ritonavir, saquinavir and tipranavir. Functionally, aspartic protease. Appears to act as negative regulator of constitutive exocytosis. May act at the level of secretory vesicle docking and fusion as a competitive inhibitor of SNARE assembly. Acts as a linker between the 19S proteasome and polyubiquitinated proteins like the HO endonuclease and UFO1 via UBA domain interactions with ubiquitin for their subsequent degradation. Required for S-phase checkpoint control. This Saccharomyces cerevisiae (strain ATCC 204508 / S288c) (Baker's yeast) protein is DNA damage-inducible protein 1 (DDI1).